Reading from the N-terminus, the 181-residue chain is Adenine phosphoribosyltransferase (181 aa).

This sequence belongs to the purine/pyrimidine phosphoribosyltransferase family. As to quaternary structure, homodimer.

The protein localises to the cytoplasm. The catalysed reaction is AMP + diphosphate = 5-phospho-alpha-D-ribose 1-diphosphate + adenine. It participates in purine metabolism; AMP biosynthesis via salvage pathway; AMP from adenine: step 1/1. In terms of biological role, catalyzes a salvage reaction resulting in the formation of AMP, that is energically less costly than de novo synthesis. The protein is Adenine phosphoribosyltransferase of Chelativorans sp. (strain BNC1).